We begin with the raw amino-acid sequence, 265 residues long: Silencing boundary-establishment protein FUB1-like protein (265 aa).

Residues 194–265 form a disordered region; that stretch reads HPENRSRNEQ…MPPGSSDMFM (72 aa).

The protein belongs to the proteasome inhibitor PI31 family. In terms of assembly, interacts with the 20S proteasome.

Its subcellular location is the cytoplasm. It is found in the nucleus. Functionally, may play a role in the establishment of transcriptional silencing boundaries, preventing the propagation of heterochromatic silencing. The protein is Silencing boundary-establishment protein FUB1-like protein of Schizosaccharomyces pombe (strain 972 / ATCC 24843) (Fission yeast).